We begin with the raw amino-acid sequence, 394 residues long: Elongation factor Tu (394 aa).

The 195-residue stretch at 10-204 folds into the tr-type G domain; that stretch reads KPHVNVGTIG…ALDSYIPEPE (195 aa). Residues 19-26 form a G1 region; sequence GHVDHGKT. 19-26 is a binding site for GTP; sequence GHVDHGKT. Thr26 lines the Mg(2+) pocket. Residues 60–64 are G2; sequence GITIN. Residues 81 to 84 are G3; it reads DCPG. Residues 81–85 and 136–139 contribute to the GTP site; these read DCPGH and NKCD. The tract at residues 136-139 is G4; the sequence is NKCD. The G5 stretch occupies residues 174 to 176; the sequence is SAL.

The protein belongs to the TRAFAC class translation factor GTPase superfamily. Classic translation factor GTPase family. EF-Tu/EF-1A subfamily. Monomer.

The protein localises to the cytoplasm. The catalysed reaction is GTP + H2O = GDP + phosphate + H(+). In terms of biological role, GTP hydrolase that promotes the GTP-dependent binding of aminoacyl-tRNA to the A-site of ribosomes during protein biosynthesis. The polypeptide is Elongation factor Tu (Sodalis glossinidius (strain morsitans)).